Reading from the N-terminus, the 261-residue chain is Pimeloyl-[acyl-carrier protein] methyl ester esterase (261 aa).

The AB hydrolase-1 domain occupies 16-241 (LVLIHGWGMN…QASHAPFISH (226 aa)). Substrate contacts are provided by residues Trp-22, 82–83 (SL), and 143–147 (FMTLQ). Ser-82 functions as the Nucleophile in the catalytic mechanism. Active-site residues include Asp-207 and His-235. His-235 serves as a coordination point for substrate.

The protein belongs to the AB hydrolase superfamily. Carboxylesterase BioH family. Monomer.

Its subcellular location is the cytoplasm. The catalysed reaction is 6-carboxyhexanoyl-[ACP] methyl ester + H2O = 6-carboxyhexanoyl-[ACP] + methanol + H(+). It functions in the pathway cofactor biosynthesis; biotin biosynthesis. Its function is as follows. The physiological role of BioH is to remove the methyl group introduced by BioC when the pimeloyl moiety is complete. It allows to synthesize pimeloyl-ACP via the fatty acid synthetic pathway through the hydrolysis of the ester bonds of pimeloyl-ACP esters. The protein is Pimeloyl-[acyl-carrier protein] methyl ester esterase of Aliivibrio salmonicida (strain LFI1238) (Vibrio salmonicida (strain LFI1238)).